The primary structure comprises 346 residues: Upstream stimulatory factor 2 (346 aa).

Disordered stretches follow at residues 1 to 44 and 215 to 244; these read MDML…PGAE and APRT…NEVE. Positions 11–20 are enriched in low complexity; the sequence is ASSATAAAAA. Positions 226-244 are enriched in basic and acidic residues; it reads DGTRTPRDERRRAQHNEVE. The bHLH domain maps to 235-290; the sequence is RRRAQHNEVERRRRDKINNWIVQLSKIIPDCHADNSKTGASKGGILSKACDYIREL. The segment at 307–328 is leucine-zipper; it reads LQMDNELLRQQIEELKNENALL.

In terms of assembly, efficient DNA binding requires dimerization with another bHLH protein. Binds DNA as a homodimer or a heterodimer (USF1/USF2). Interacts with MAF.

Its subcellular location is the nucleus. In terms of biological role, transcription factor that binds to a symmetrical DNA sequence (E-boxes) (5'-CACGTG-3') that is found in a variety of viral and cellular promoters. This is Upstream stimulatory factor 2 (Usf2) from Mus musculus (Mouse).